We begin with the raw amino-acid sequence, 477 residues long: UDP-N-acetylmuramate--L-alanine ligase (477 aa).

122–128 (GTHGKTT) lines the ATP pocket.

The protein belongs to the MurCDEF family.

The protein localises to the cytoplasm. It carries out the reaction UDP-N-acetyl-alpha-D-muramate + L-alanine + ATP = UDP-N-acetyl-alpha-D-muramoyl-L-alanine + ADP + phosphate + H(+). The protein operates within cell wall biogenesis; peptidoglycan biosynthesis. Functionally, cell wall formation. This Xylella fastidiosa (strain M12) protein is UDP-N-acetylmuramate--L-alanine ligase.